The primary structure comprises 154 residues: Putative thioredoxin H10 (154 aa).

The Thioredoxin domain occupies 24–148 (NNNNSYGQTR…LQKKTAAAAD (125 aa)). Residues cysteine 74 and cysteine 77 each act as nucleophile in the active site. The cysteines at positions 74 and 77 are disulfide-linked.

It belongs to the thioredoxin family.

It is found in the cytoplasm. Probable thiol-disulfide oxidoreductase that may be involved in the redox regulation of a number of cytosolic enzymes. In Arabidopsis thaliana (Mouse-ear cress), this protein is Putative thioredoxin H10.